Consider the following 433-residue polypeptide: Forkhead box protein A2-B (433 aa).

The fork-head DNA-binding region spans 147 to 241 (KPPYSYISLI…ENGCYLRRQK (95 aa)). Positions 247–260 (KKPSLREGGGKKLS) are enriched in basic and acidic residues. Disordered stretches follow at residues 247-337 (KKPS…QSHL) and 407-433 (SGLEPSPISSDTSYYQGGYSRPIMNSS). Residues 261-282 (EGASSVGSVGNSSSERSVGNES) are compositionally biased toward low complexity. Residues 292 to 302 (EQKRSLVDMKS) are compositionally biased toward basic and acidic residues. Residues 315–331 (ASQAQHLLSQHHSVLSH) are compositionally biased toward low complexity. Residues 407–421 (SGLEPSPISSDTSYY) show a composition bias toward polar residues.

It localises to the nucleus. In terms of biological role, acts as a transcriptional activator during early development, limiting the extent of mesoderm formation in the gastrula. Binds to DNA via the target sequence 5'-GT[AC]AACA-3', with 5'-GTAAACA-3' being the preferred binding site. This Xenopus laevis (African clawed frog) protein is Forkhead box protein A2-B (foxa2-b).